Consider the following 326-residue polypeptide: Adenosine receptor A1 (326 aa).

The Extracellular segment spans residues M1 to A10. A helical transmembrane segment spans residues A11–A33. The Cytoplasmic segment spans residues V34–C46. The chain crosses the membrane as a helical span at residues F47 to I69. Topologically, residues N70–C80 are extracellular. The cysteines at positions 80 and 169 are disulfide-linked. A helical membrane pass occupies residues L81–A102. Residues V103 to R123 lie on the Cytoplasmic side of the membrane. Residues A124–W146 traverse the membrane as a helical segment. Over N147–S176 the chain is Extracellular. N148 and N159 each carry an N-linked (GlcNAc...) asparagine glycan. A helical membrane pass occupies residues M177–M201. At E202–S235 the chain is on the cytoplasmic side. Residues L236–F259 traverse the membrane as a helical segment. The Extracellular segment spans residues C260–R267. A helical transmembrane segment spans residues I268 to I292. Residues Q293 to D326 lie on the Cytoplasmic side of the membrane. The S-palmitoyl cysteine moiety is linked to residue C309.

Belongs to the G-protein coupled receptor 1 family.

It localises to the cell membrane. Functionally, receptor for adenosine. The activity of this receptor is mediated by G proteins which inhibit adenylyl cyclase. This is Adenosine receptor A1 (ADORA1) from Bos taurus (Bovine).